The primary structure comprises 450 residues: DNA primase DnaG (450 aa).

The region spanning 199–273 (DSIIVVEGRA…DVDYVARAPE (75 aa)) is the Toprim domain. Residues Glu-205, Asp-247, and Asp-249 each contribute to the Mg(2+) site. Residues 320-348 (APSKEVKPAPKHEPKPQPVEQKPREEKII) show a composition bias toward basic and acidic residues. Residues 320 to 350 (APSKEVKPAPKHEPKPQPVEQKPREEKIIRP) form a disordered region.

The protein belongs to the archaeal DnaG primase family. As to quaternary structure, forms a ternary complex with MCM helicase and DNA. Component of the archaeal exosome complex. Requires Mg(2+) as cofactor.

The enzyme catalyses ssDNA + n NTP = ssDNA/pppN(pN)n-1 hybrid + (n-1) diphosphate.. In terms of biological role, RNA polymerase that catalyzes the synthesis of short RNA molecules used as primers for DNA polymerase during DNA replication. Also part of the exosome, which is a complex involved in RNA degradation. Acts as a poly(A)-binding protein that enhances the interaction between heteromeric, adenine-rich transcripts and the exosome. This chain is DNA primase DnaG, found in Thermococcus gammatolerans (strain DSM 15229 / JCM 11827 / EJ3).